The following is a 579-amino-acid chain: Arginine--tRNA ligase (579 aa).

A 'HIGH' region motif is present at residues 127–137 (PNLAKEMHVGH).

Belongs to the class-I aminoacyl-tRNA synthetase family. As to quaternary structure, monomer.

It is found in the cytoplasm. It catalyses the reaction tRNA(Arg) + L-arginine + ATP = L-arginyl-tRNA(Arg) + AMP + diphosphate. The chain is Arginine--tRNA ligase from Stutzerimonas stutzeri (strain A1501) (Pseudomonas stutzeri).